The chain runs to 409 residues: L-cysteine:1D-myo-inositol 2-amino-2-deoxy-alpha-D-glucopyranoside ligase (409 aa).

C43 provides a ligand contact to Zn(2+). L-cysteinyl-5'-AMP contacts are provided by residues 43–46 (CGIT), T58, and 81–83 (NVT). Residues 45–55 (ITPYDATHMGH) carry the 'HIGH' region motif. A 'ERGGDP' region motif is present at residues 183 to 188 (ERGGDP). W224 provides a ligand contact to L-cysteinyl-5'-AMP. Position 228 (C228) interacts with Zn(2+). 246-248 (GSD) provides a ligand contact to L-cysteinyl-5'-AMP. H253 serves as a coordination point for Zn(2+). Residue V280 coordinates L-cysteinyl-5'-AMP. Positions 286–290 (KMSKS) match the 'KMSKS' region motif.

The protein belongs to the class-I aminoacyl-tRNA synthetase family. MshC subfamily. As to quaternary structure, monomer. It depends on Zn(2+) as a cofactor.

It carries out the reaction 1D-myo-inositol 2-amino-2-deoxy-alpha-D-glucopyranoside + L-cysteine + ATP = 1D-myo-inositol 2-(L-cysteinylamino)-2-deoxy-alpha-D-glucopyranoside + AMP + diphosphate + H(+). Functionally, catalyzes the ATP-dependent condensation of GlcN-Ins and L-cysteine to form L-Cys-GlcN-Ins. The polypeptide is L-cysteine:1D-myo-inositol 2-amino-2-deoxy-alpha-D-glucopyranoside ligase (Streptomyces griseus subsp. griseus (strain JCM 4626 / CBS 651.72 / NBRC 13350 / KCC S-0626 / ISP 5235)).